We begin with the raw amino-acid sequence, 135 residues long: ATP synthase epsilon chain, chloroplastic (135 aa).

This sequence belongs to the ATPase epsilon chain family. As to quaternary structure, F-type ATPases have 2 components, CF(1) - the catalytic core - and CF(0) - the membrane proton channel. CF(1) has five subunits: alpha(3), beta(3), gamma(1), delta(1), epsilon(1). CF(0) has three main subunits: a, b and c.

It localises to the plastid. Its subcellular location is the chloroplast thylakoid membrane. Functionally, produces ATP from ADP in the presence of a proton gradient across the membrane. The polypeptide is ATP synthase epsilon chain, chloroplastic (Marchantia polymorpha (Common liverwort)).